Reading from the N-terminus, the 552-residue chain is MTMEQEIEVLDQFPVGMRVLAVDDDQTCLRILQTLLQRCQYHVTTTNQAQTALELLRENKNKFDLVISDVDMPDMDGFKLLELVGLEMDLPVIMLSAHSDPKYVMKGVKHGACDYLLKPVRIEELKNIWQHVVRKSKLKKNKSNVSNGSGNCDKANRKRKEQYEEEEEEERGNDNDDPTAQKKPRVLWTHELHNKFLAAVDHLGVERAVPKKILDLMNVDKLTRENVASHLQKFRVALKKVSDDAIQQANRAAIDSHFMQMNSQKGLGGFYHHHRGIPVGSGQFHGGTTMMRHYSSNRNLGRLNSLGAGMFQPVSSSFPRNHNDGGNILQGLPLEELQINNNINRAFPSFTSQQNSPMVAPSNLLLLEGNPQSSSLPSNPGFSPHFEISKRLEHWSNAALSTNIPQSDVHSKPDTLEWNAFCDSASPLVNPNLDTNPASLCRNTGFGSTNAAQTDFFYPLQMNQQPANNSGPVTEAQLFRSSNPNEGLLMGQQKLQSGLMASDAGSLDDIVNSLMTQEQSQSDFSEGDWDLDGLAHSEHAYEKLHFPFSLSA.

One can recognise a Response regulatory domain in the interval 18-133 (RVLAVDDDQT…ELKNIWQHVV (116 aa)). Asp-69 bears the 4-aspartylphosphate mark. Positions 139-181 (KKNKSNVSNGSGNCDKANRKRKEQYEEEEEEERGNDNDDPTAQ) are disordered. Residues 151–173 (NCDKANRKRKEQYEEEEEEERGN) are a coiled coil. Over residues 163 to 177 (YEEEEEEERGNDNDD) the composition is skewed to acidic residues. The Nuclear localization signal motif lies at 182 to 185 (KKPR). A DNA-binding region (myb-like GARP) is located at residues 185–235 (RVLWTHELHNKFLAAVDHLGVERAVPKKILDLMNVDKLTRENVASHLQKFR).

This sequence belongs to the ARR family. Type-B subfamily. In terms of assembly, binds the target DNA as a monomer. In terms of processing, two-component system major event consists of a His-to-Asp phosphorelay between a sensor histidine kinase (HK) and a response regulator (RR). In plants, the His-to-Asp phosphorelay involves an additional intermediate named Histidine-containing phosphotransfer protein (HPt). This multistep phosphorelay consists of a His-Asp-His-Asp sequential transfer of a phosphate group between first a His and an Asp of the HK protein, followed by the transfer to a conserved His of the HPt protein and finally the transfer to an Asp in the receiver domain of the RR protein. In terms of tissue distribution, detected in the whole plant. Predominantly expressed in roots and leaves.

The protein localises to the nucleus. Its function is as follows. Transcriptional activator that binds specifically to the DNA sequence 5'-[AG]GATT-3'. Functions as a response regulator involved in His-to-Asp phosphorelay signal transduction system. Phosphorylation of the Asp residue in the receiver domain activates the ability of the protein to promote the transcription of target genes. Could directly activate some type-A response regulators in response to cytokinins. In Arabidopsis thaliana (Mouse-ear cress), this protein is Two-component response regulator ARR10 (ARR10).